Reading from the N-terminus, the 264-residue chain is Ferric siderophore reductase (264 aa).

The FAD-binding FR-type domain occupies 9 to 127 (SPTRLTYISD…PGPLKMNRFD (119 aa)). FAD-binding residues include Arg-73, Ser-74, Thr-76, Asp-90, Val-92, His-96, Ala-100, Thr-101, Lys-247, Asn-249, Thr-250, and Ala-252.

It belongs to the SIP oxidoreductase family. It depends on FAD as a cofactor.

Ferric-siderophore reductase involved in iron removal from the siderophores after their transport into the cell. Catalyzes the reduction of the ferric iron bound to the hydroxamate siderophores produced by Shewanella to ferrous iron. Can use a ferredoxin as electron donor. Despite the clear evidence for the interaction with NAD(P)H, no direct reduction of the enzyme by these compounds is observed, nor consumption of NAD(P)H, suggesting that NADH and NADPH are not the physiological electron donors. In Shewanella frigidimarina (strain NCIMB 400), this protein is Ferric siderophore reductase.